The primary structure comprises 213 residues: ATP synthase peripheral stalk subunit OSCP, mitochondrial (213 aa).

The N-terminal 23 residues, 1–23 (MAAPAVSGFSRQVRCFSTSVVRP), are a transit peptide targeting the mitochondrion. An SIFI-degron motif is present at residues 5-23 (AVSGFSRQVRCFSTSVVRP). N6-acetyllysine occurs at positions 54, 60, 70, and 73. At K90 the chain carries N6-succinyllysine. N6-acetyllysine; alternate is present on residues K100 and K158. K100 and K158 each carry N6-succinyllysine; alternate. Residues K172, K176, and K192 each carry the N6-acetyllysine modification. The residue at position 199 (K199) is an N6-succinyllysine.

It belongs to the ATPase delta chain family. Component of the ATP synthase complex composed at least of ATP5F1A/subunit alpha, ATP5F1B/subunit beta, ATP5MC1/subunit c (homooctomer), MT-ATP6/subunit a, MT-ATP8/subunit 8, ATP5ME/subunit e, ATP5MF/subunit f, ATP5MG/subunit g, ATP5MK/subunit k, ATP5MJ/subunit j, ATP5F1C/subunit gamma, ATP5F1D/subunit delta, ATP5F1E/subunit epsilon, ATP5PF/subunit F6, ATP5PB/subunit b, ATP5PD/subunit d, ATP5PO/subunit OSCP. ATP synthase complex consists of a soluble F(1) head domain (subunits alpha(3) and beta(3)) - the catalytic core - and a membrane F(0) domain - the membrane proton channel (subunits c, a, 8, e, f, g, k and j). These two domains are linked by a central stalk (subunits gamma, delta, and epsilon) rotating inside the F1 region and a stationary peripheral stalk (subunits F6, b, d, and OSCP). In terms of processing, in response to mitochondrial stress, the precursor protein is ubiquitinated by the SIFI complex in the cytoplasm before mitochondrial import, leading to its degradation. Within the SIFI complex, UBR4 initiates ubiquitin chain that are further elongated or branched by KCMF1.

Its subcellular location is the mitochondrion. The protein resides in the mitochondrion inner membrane. Functionally, subunit OSCP, of the mitochondrial membrane ATP synthase complex (F(1)F(0) ATP synthase or Complex V) that produces ATP from ADP in the presence of a proton gradient across the membrane which is generated by electron transport complexes of the respiratory chain. ATP synthase complex consist of a soluble F(1) head domain - the catalytic core - and a membrane F(1) domain - the membrane proton channel. These two domains are linked by a central stalk rotating inside the F(1) region and a stationary peripheral stalk. During catalysis, ATP synthesis in the catalytic domain of F(1) is coupled via a rotary mechanism of the central stalk subunits to proton translocation. In vivo, can only synthesize ATP although its ATP hydrolase activity can be activated artificially in vitro. Part of the complex F(0) domain. Part of the complex F(0) domain and the peripheric stalk, which acts as a stator to hold the catalytic alpha(3)beta(3) subcomplex and subunit a/ATP6 static relative to the rotary elements. In Rhinolophus ferrumequinum (Greater horseshoe bat), this protein is ATP synthase peripheral stalk subunit OSCP, mitochondrial.